A 320-amino-acid chain; its full sequence is Acyl-coenzyme A thioesterase 8 (320 aa).

Active-site charge relay system residues include aspartate 233, serine 255, and glutamine 305. The Microbody targeting signal motif lies at 318–320 (SKL).

The protein belongs to the C/M/P thioester hydrolase family. In terms of assembly, homodimer.

The protein localises to the peroxisome matrix. It carries out the reaction choloyl-CoA + H2O = cholate + CoA + H(+). It catalyses the reaction chenodeoxycholoyl-CoA + H2O = chenodeoxycholate + CoA + H(+). The catalysed reaction is acetyl-CoA + H2O = acetate + CoA + H(+). The enzyme catalyses butanoyl-CoA + H2O = butanoate + CoA + H(+). It carries out the reaction hexanoyl-CoA + H2O = hexanoate + CoA + H(+). It catalyses the reaction octanoyl-CoA + H2O = octanoate + CoA + H(+). The catalysed reaction is decanoyl-CoA + H2O = decanoate + CoA + H(+). The enzyme catalyses dodecanoyl-CoA + H2O = dodecanoate + CoA + H(+). It carries out the reaction tetradecanoyl-CoA + H2O = tetradecanoate + CoA + H(+). It catalyses the reaction 4,8-dimethylnonanoyl-CoA + H2O = 4,8-dimethylnonanoate + CoA + H(+). The catalysed reaction is 2,6-dimethylheptanoyl-CoA + H2O = 2,6-dimethylheptanoate + CoA + H(+). The enzyme catalyses malonyl-CoA + H2O = malonate + CoA + H(+). It carries out the reaction acetoacetyl-CoA + H2O = acetoacetate + CoA + H(+). It catalyses the reaction propanoyl-CoA + H2O = propanoate + CoA + H(+). The catalysed reaction is succinyl-CoA + H2O = succinate + CoA + H(+). The enzyme catalyses glutaryl-CoA + H2O = glutarate + CoA + H(+). It carries out the reaction hexanedioyl-CoA + H2O = hexanedioate + CoA + H(+). It catalyses the reaction octanedioyl-CoA + H2O = octanedioate + CoA + H(+). The catalysed reaction is decanedioyl-CoA + H2O = decanedioate + CoA + H(+). The enzyme catalyses dodecanedioyl-CoA + H2O = dodecanedioate + CoA + H(+). It carries out the reaction (9Z)-tetradecenoyl-CoA + H2O = (9Z)-tetradecenoate + CoA + H(+). It catalyses the reaction hexadecanoyl-CoA + H2O = hexadecanoate + CoA + H(+). The catalysed reaction is (9Z)-hexadecenoyl-CoA + H2O = (9Z)-hexadecenoate + CoA + H(+). The enzyme catalyses octadecanoyl-CoA + H2O = octadecanoate + CoA + H(+). It carries out the reaction (9Z)-octadecenoyl-CoA + H2O = (9Z)-octadecenoate + CoA + H(+). It catalyses the reaction (9Z,12Z)-octadecadienoyl-CoA + H2O = (9Z,12Z)-octadecadienoate + CoA + H(+). The catalysed reaction is eicosanoyl-CoA + H2O = eicosanoate + CoA + H(+). The enzyme catalyses (5Z,8Z,11Z,14Z)-eicosatetraenoyl-CoA + H2O = (5Z,8Z,11Z,14Z)-eicosatetraenoate + CoA + H(+). It carries out the reaction (3S)-3-hydroxy-3-methylglutaryl-CoA + H2O = 3-hydroxy-3-methylglutarate + CoA + H(+). It catalyses the reaction 3alpha,7alpha,12alpha-trihydroxy-5beta-cholestan-26-oyl-CoA + H2O = 3alpha,7alpha,12alpha-trihydroxy-5beta-cholestan-26-oate + CoA + H(+). The catalysed reaction is 2-methyloctadecanoyl-CoA + H2O = 2-methyloctadecanoate + CoA + H(+). The enzyme catalyses prostaglandin F2alpha-CoA + H2O = prostaglandin F2alpha + CoA + H(+). With respect to regulation, inhibited by CoASH (IC(50)=10-15 uM). Also inhibited by cysteine-reactive agents. Its function is as follows. Catalyzes the hydrolysis of acyl-CoAs into free fatty acids and coenzyme A (CoASH), regulating their respective intracellular levels. Displays no strong substrate specificity with respect to the carboxylic acid moiety of Acyl-CoAs. Hydrolyzes medium length (C2 to C20) straight-chain, saturated and unsaturated acyl-CoAS but is inactive towards substrates with longer aliphatic chains. Moreover, it catalyzes the hydrolysis of CoA esters of bile acids, such as choloyl-CoA and chenodeoxycholoyl-CoA and competes with bile acid CoA:amino acid N-acyltransferase (BAAT). Is also able to hydrolyze CoA esters of dicarboxylic acids. It is involved in the metabolic regulation of peroxisome proliferation. The sequence is that of Acyl-coenzyme A thioesterase 8 (Acot8) from Rattus norvegicus (Rat).